Consider the following 1462-residue polypeptide: Trifunctional nucleotide phosphoesterase protein YfkN (1462 aa).

The first 35 residues, 1–35 (MRIQKRRTHVENILRILLPPIMILSLILPTPPIHA), serve as a signal peptide directing secretion. The interval 36 to 623 (EESAAPQVHL…GTNLTFESSL (588 aa)) is 2',3'-cyclic nucleotide 2'-phosphodiesterase/3'-nucleotidase. Residues D52, H54, D97, N141, H249, H282, and H284 each coordinate a divalent metal cation. Residues Y458 and 561 to 567 (YRASGGG) contribute to the a ribonucleoside 3'-phosphate site. The segment at 624–1427 (LAKPFADKAD…GPAGGLLPDT (804 aa)) is 5'-nucleotidase. 7 residues coordinate a divalent metal cation: D676, H678, D708, N740, H872, H895, and H897. A ribonucleoside 5'-phosphate contacts are provided by residues F1047 and 1127 to 1133 (FVGAGGD). Positions 1350-1422 (ILNSGSNNKP…GSGTDGPAGG (73 aa)) are disordered. A compositionally biased stretch (gly residues) spans 1405 to 1421 (GSGGNGSGGSGTDGPAG). Residues 1424-1428 (LPDTA) carry the LPXTG sorting signal motif. T1427 carries the pentaglycyl murein peptidoglycan amidated threonine modification. Residues 1428-1462 (ATSMYSILLAGFLISALGTAMYLHQRRKQNRANQA) constitute a propeptide, removed by sortase.

It belongs to the 5'-nucleotidase family. The cofactor is a divalent metal cation.

It localises to the secreted. The protein localises to the cell wall. The catalysed reaction is a nucleoside 2',3'-cyclic phosphate + H2O = a nucleoside 3'-phosphate + H(+). The enzyme catalyses a ribonucleoside 3'-phosphate + H2O = a ribonucleoside + phosphate. It carries out the reaction a ribonucleoside 5'-phosphate + H2O = a ribonucleoside + phosphate. In terms of biological role, catalyzes the release of inorganic phosphate from 2',3'-cyclic nucleotides through consecutive 2',3'-phosphodiesterase and 3'- (or 2') nucleotidase activities. Also possesses a 5'-nucleotidase activity. Does not catalyze the release of inorganic phosphate from 3',5'-cyclic nucleotides. Probably plays a role in the cellular reprocessing of nucleotides present in the medium, under conditions of phosphate shortage. The protein is Trifunctional nucleotide phosphoesterase protein YfkN (yfkN) of Bacillus subtilis (strain 168).